The chain runs to 339 residues: Heat-inducible transcription repressor HrcA (339 aa).

It belongs to the HrcA family.

Functionally, negative regulator of class I heat shock genes (grpE-dnaK-dnaJ and groELS operons). Prevents heat-shock induction of these operons. The chain is Heat-inducible transcription repressor HrcA from Paraburkholderia phymatum (strain DSM 17167 / CIP 108236 / LMG 21445 / STM815) (Burkholderia phymatum).